Here is a 665-residue protein sequence, read N- to C-terminus: UvrABC system protein B (665 aa).

The region spanning 25 to 178 is the Helicase ATP-binding domain; that stretch reads ASLQAEHRFQ…RQLLRDLTTI (154 aa). 38–45 serves as a coordination point for ATP; that stretch reads GATGTGKT. The Beta-hairpin signature appears at 91–114; the sequence is YYDYYQPEAYIPVTDTYIEKTAAI. The 167-residue stretch at 429–595 folds into the Helicase C-terminal domain; sequence QVDDLLGEVR…PIVKKASNAI (167 aa). The region spanning 626–661 is the UVR domain; the sequence is PELITQLEAQMKEAAKKLEFEEAAKYRDRIKQLRDK.

The protein belongs to the UvrB family. Forms a heterotetramer with UvrA during the search for lesions. Interacts with UvrC in an incision complex.

Its subcellular location is the cytoplasm. Functionally, the UvrABC repair system catalyzes the recognition and processing of DNA lesions. A damage recognition complex composed of 2 UvrA and 2 UvrB subunits scans DNA for abnormalities. Upon binding of the UvrA(2)B(2) complex to a putative damaged site, the DNA wraps around one UvrB monomer. DNA wrap is dependent on ATP binding by UvrB and probably causes local melting of the DNA helix, facilitating insertion of UvrB beta-hairpin between the DNA strands. Then UvrB probes one DNA strand for the presence of a lesion. If a lesion is found the UvrA subunits dissociate and the UvrB-DNA preincision complex is formed. This complex is subsequently bound by UvrC and the second UvrB is released. If no lesion is found, the DNA wraps around the other UvrB subunit that will check the other stand for damage. The chain is UvrABC system protein B from Cyanothece sp. (strain PCC 7425 / ATCC 29141).